We begin with the raw amino-acid sequence, 68 residues long: Dermaseptin-H5 (68 aa).

The first 17 residues, 1–17, serve as a signal peptide directing secretion; the sequence is KSLFLVLFLGMVSLSIC. The propeptide occupies 18 to 38; sequence EEEKRENEDEEKQEDDEQSEM. The interval 19 to 40 is disordered; the sequence is EEKRENEDEEKQEDDEQSEMKR. The segment covering 25–35 has biased composition (acidic residues); the sequence is EDEEKQEDDEQ. A Leucine amide modification is found at L65. Residues 67 to 68 constitute a propeptide that is removed on maturation; that stretch reads EQ.

In terms of tissue distribution, expressed by the skin glands.

Its subcellular location is the secreted. In terms of biological role, has antibacterial activity against the Gram-negative bacteria E.coli ATCC 11775 (MIC=0.5 uM), and the Gram-positive bacteria S.aureus ATCC 12600 (MIC=0.5 uM) and M.luteus ATCC 49732 (MIC=2.0 uM). Does not inhibit the growth of the fungus C.albicans. Probably acts by disturbing membrane functions with its amphipathic structure. This is Dermaseptin-H5 from Pithecopus azureus (Orange-legged monkey tree frog).